A 66-amino-acid polypeptide reads, in one-letter code: Toxin Boma6c (66 aa).

The 63-residue stretch at Arg-2–His-64 folds into the LCN-type CS-alpha/beta domain. 4 disulfide bridges follow: Cys-12–Cys-63, Cys-16–Cys-36, Cys-22–Cys-46, and Cys-26–Cys-48.

The protein belongs to the long (4 C-C) scorpion toxin superfamily. Sodium channel inhibitor family. Alpha subfamily. In terms of tissue distribution, expressed by the venom gland.

Its subcellular location is the secreted. In terms of biological role, alpha toxins bind voltage-independently at site-3 of sodium channels (Nav) and inhibit the inactivation of the activated channels, thereby blocking neuronal transmission. This is Toxin Boma6c from Buthus occitanus mardochei (Moroccan scorpion).